A 345-amino-acid polypeptide reads, in one-letter code: UDP-N-acetylenolpyruvoylglucosamine reductase (345 aa).

Residues 16–186 (LPAYASNVIS…VSVGIKLMKS (171 aa)) enclose the FAD-binding PCMH-type domain. The active site involves Arg162. Ser232 acts as the Proton donor in catalysis. Residue Glu328 is part of the active site.

This sequence belongs to the MurB family. The cofactor is FAD.

It is found in the cytoplasm. The enzyme catalyses UDP-N-acetyl-alpha-D-muramate + NADP(+) = UDP-N-acetyl-3-O-(1-carboxyvinyl)-alpha-D-glucosamine + NADPH + H(+). It functions in the pathway cell wall biogenesis; peptidoglycan biosynthesis. Cell wall formation. This is UDP-N-acetylenolpyruvoylglucosamine reductase from Yersinia pestis.